Here is a 243-residue protein sequence, read N- to C-terminus: Pyridoxine 5'-phosphate synthase (243 aa).

Residue N7 coordinates 3-amino-2-oxopropyl phosphate. D9–H10 provides a ligand contact to 1-deoxy-D-xylulose 5-phosphate. R18 contributes to the 3-amino-2-oxopropyl phosphate binding site. The active-site Proton acceptor is the H43. Residues R45 and H50 each coordinate 1-deoxy-D-xylulose 5-phosphate. The active-site Proton acceptor is the E70. Position 100 (T100) interacts with 1-deoxy-D-xylulose 5-phosphate. Residue H192 is the Proton donor of the active site. 3-amino-2-oxopropyl phosphate-binding positions include G193 and G215 to F216.

The protein belongs to the PNP synthase family. As to quaternary structure, homooctamer; tetramer of dimers.

Its subcellular location is the cytoplasm. The catalysed reaction is 3-amino-2-oxopropyl phosphate + 1-deoxy-D-xylulose 5-phosphate = pyridoxine 5'-phosphate + phosphate + 2 H2O + H(+). The protein operates within cofactor biosynthesis; pyridoxine 5'-phosphate biosynthesis; pyridoxine 5'-phosphate from D-erythrose 4-phosphate: step 5/5. Functionally, catalyzes the complicated ring closure reaction between the two acyclic compounds 1-deoxy-D-xylulose-5-phosphate (DXP) and 3-amino-2-oxopropyl phosphate (1-amino-acetone-3-phosphate or AAP) to form pyridoxine 5'-phosphate (PNP) and inorganic phosphate. The polypeptide is Pyridoxine 5'-phosphate synthase (Salinibacter ruber (strain DSM 13855 / M31)).